The chain runs to 256 residues: Undecaprenyl-diphosphatase (256 aa).

A run of 7 helical transmembrane segments spans residues 8 to 28 (VLGIVEGISEFLPISSTGHLI), 41 to 61 (FVKSFEISIQLGSILAVVVLY), 75 to 95 (IIAAFIPTGIIGFLLYKLIKG), 96 to 116 (FLIGNDLVVVVSLILGGIILI), 175 to 195 (AEFSFLLAIPTMFAATTYDLI), 208 to 228 (ILIIGFITSFITALIVVKWFL), and 236 to 256 (LKIFGFYRILIGLVYAAFFLF).

The protein belongs to the UppP family.

The protein resides in the cell inner membrane. The enzyme catalyses di-trans,octa-cis-undecaprenyl diphosphate + H2O = di-trans,octa-cis-undecaprenyl phosphate + phosphate + H(+). Its function is as follows. Catalyzes the dephosphorylation of undecaprenyl diphosphate (UPP). Confers resistance to bacitracin. This is Undecaprenyl-diphosphatase from Aquifex aeolicus (strain VF5).